Reading from the N-terminus, the 22-residue chain is Mu-conotoxin CnIIIA (22 aa).

Intrachain disulfides connect C3/C15, C4/C21, and C10/C22. C22 is modified (cysteine amide).

Belongs to the conotoxin M superfamily. Expressed by the venom duct. Has not been isolated from the crude venom.

It is found in the secreted. Functionally, mu-conotoxins block voltage-gated sodium channels (Nav). This synthetic toxin moderately blocks rNav1.1/SCN1A, rNav1.2/SCN2A, rNav1.3/SCN3A, rNav1.4/SCN4A, rNav1.5/SCN5A, and mNav1.6/SCN8A. This block is very slowly reversible. Causes seizures when injected intracranially into mice. The protein is Mu-conotoxin CnIIIA of Conus consors (Singed cone).